Reading from the N-terminus, the 380-residue chain is Cell division protein FtsZ (380 aa).

GTP contacts are provided by residues 27–31 (GAGNN), 119–121 (GTG), E150, and N189.

This sequence belongs to the FtsZ family. In terms of assembly, homodimer. Polymerizes to form a dynamic ring structure in a strictly GTP-dependent manner. Interacts directly with several other division proteins.

It localises to the cytoplasm. Functionally, essential cell division protein that forms a contractile ring structure (Z ring) at the future cell division site. The regulation of the ring assembly controls the timing and the location of cell division. One of the functions of the FtsZ ring is to recruit other cell division proteins to the septum to produce a new cell wall between the dividing cells. Binds GTP and shows GTPase activity. This Mycoplasma pneumoniae (strain ATCC 29342 / M129 / Subtype 1) (Mycoplasmoides pneumoniae) protein is Cell division protein FtsZ.